We begin with the raw amino-acid sequence, 108 residues long: Protein Asterix (108 aa).

The disordered stretch occupies residues Met-1–Asn-29. Residues Val-80–Leu-96 traverse the membrane as a helical segment.

This sequence belongs to the Asterix family.

The protein localises to the membrane. This is Protein Asterix from Drosophila melanogaster (Fruit fly).